The chain runs to 124 residues: CBS domain-containing protein MJ0729 (124 aa).

CBS domains are found at residues 10-67 (MNKD…IEDL) and 70-124 (LIDE…YKNR).

Exhibits a pH-dependent oligomerization state: at pH 7, the dominant species is a dimer, where each monomer is a two-CBS domain protein, and at pH 4.5-4.8, the dominant species is a tetramer, with an oblong shape. At pH 2.5, there is formation of intermolecular hydrogen bonds, suggesting the presence of high-molecular weight species. The physiological dimeric species is thermal and chemically very stable.

The chain is CBS domain-containing protein MJ0729 from Methanocaldococcus jannaschii (strain ATCC 43067 / DSM 2661 / JAL-1 / JCM 10045 / NBRC 100440) (Methanococcus jannaschii).